Here is an 808-residue protein sequence, read N- to C-terminus: Probable mannosyl-oligosaccharide glucosidase (808 aa).

Topologically, residues 1-11 are cytoplasmic; the sequence is MVSDMLGGNKR. The chain crosses the membrane as a helical; Signal-anchor for type II membrane protein span at residues 12–31; the sequence is WILFGLLSFLLNCVLVSCSV. Over 32-808 the chain is Lumenal; sequence EDIEKAANDS…LVVNIMSENY (777 aa). An N-linked (GlcNAc...) asparagine glycan is attached at N39. The active-site Proton donor is D580. E778 (proton acceptor) is an active-site residue.

It belongs to the glycosyl hydrolase 63 family.

The protein localises to the endoplasmic reticulum membrane. It carries out the reaction N(4)-(alpha-D-Glc-(1-&gt;2)-alpha-D-Glc-(1-&gt;3)-alpha-D-Glc-(1-&gt;3)-alpha-D-Man-(1-&gt;2)-alpha-D-Man-(1-&gt;2)-alpha-D-Man-(1-&gt;3)-[alpha-D-Man-(1-&gt;2)-alpha-D-Man-(1-&gt;3)-[alpha-D-Man-(1-&gt;2)-alpha-D-Man-(1-&gt;6)]-alpha-D-Man-(1-&gt;6)]-beta-D-Man-(1-&gt;4)-beta-D-GlcNAc-(1-&gt;4)-beta-D-GlcNAc)-L-asparaginyl-[protein] + H2O = N(4)-(alpha-D-Glc-(1-&gt;3)-alpha-D-Glc-(1-&gt;3)-alpha-D-Man-(1-&gt;2)-alpha-D-Man-(1-&gt;2)-alpha-D-Man-(1-&gt;3)-[alpha-D-Man-(1-&gt;2)-alpha-D-Man-(1-&gt;3)-[alpha-D-Man-(1-&gt;2)-alpha-D-Man-(1-&gt;6)]-alpha-D-Man-(1-&gt;6)]-beta-D-Man-(1-&gt;4)-beta-D-GlcNAc-(1-&gt;4)-beta-D-GlcNAc)-L-asparaginyl-[protein] + beta-D-glucose. Its function is as follows. Cleaves the distal alpha 1,2-linked glucose residue from the Glc(3)Man(9)GlcNAc(2) oligosaccharide precursor highly specifically. The protein is Probable mannosyl-oligosaccharide glucosidase of Schizosaccharomyces pombe (strain 972 / ATCC 24843) (Fission yeast).